A 155-amino-acid polypeptide reads, in one-letter code: 6,7-dimethyl-8-ribityllumazine synthase (155 aa).

Residues Phe26, 60-62, and 84-86 contribute to the 5-amino-6-(D-ribitylamino)uracil site; these read ALE and AVI. Residue 89-90 participates in (2S)-2-hydroxy-3-oxobutyl phosphate binding; it reads ET. The active-site Proton donor is His92. Residue Asn117 coordinates 5-amino-6-(D-ribitylamino)uracil. Arg131 lines the (2S)-2-hydroxy-3-oxobutyl phosphate pocket.

It belongs to the DMRL synthase family.

The enzyme catalyses (2S)-2-hydroxy-3-oxobutyl phosphate + 5-amino-6-(D-ribitylamino)uracil = 6,7-dimethyl-8-(1-D-ribityl)lumazine + phosphate + 2 H2O + H(+). It functions in the pathway cofactor biosynthesis; riboflavin biosynthesis; riboflavin from 2-hydroxy-3-oxobutyl phosphate and 5-amino-6-(D-ribitylamino)uracil: step 1/2. Functionally, catalyzes the formation of 6,7-dimethyl-8-ribityllumazine by condensation of 5-amino-6-(D-ribitylamino)uracil with 3,4-dihydroxy-2-butanone 4-phosphate. This is the penultimate step in the biosynthesis of riboflavin. The polypeptide is 6,7-dimethyl-8-ribityllumazine synthase (Chromobacterium violaceum (strain ATCC 12472 / DSM 30191 / JCM 1249 / CCUG 213 / NBRC 12614 / NCIMB 9131 / NCTC 9757 / MK)).